The primary structure comprises 160 residues: Ubiquitin-conjugating enzyme E2 16 (160 aa).

The 151-residue stretch at 3-153 (SSIKRLHKEY…VRCTTYLYAK (151 aa)) folds into the UBC core domain. Residue Cys-90 is the Glycyl thioester intermediate of the active site.

This sequence belongs to the ubiquitin-conjugating enzyme family.

It carries out the reaction S-ubiquitinyl-[E1 ubiquitin-activating enzyme]-L-cysteine + [E2 ubiquitin-conjugating enzyme]-L-cysteine = [E1 ubiquitin-activating enzyme]-L-cysteine + S-ubiquitinyl-[E2 ubiquitin-conjugating enzyme]-L-cysteine.. It participates in protein modification; protein ubiquitination. Functionally, catalyzes the covalent attachment of ubiquitin to other proteins. The polypeptide is Ubiquitin-conjugating enzyme E2 16 (ubc16) (Schizosaccharomyces pombe (strain 972 / ATCC 24843) (Fission yeast)).